Reading from the N-terminus, the 100-residue chain is Small ribosomal subunit protein uS14c (100 aa).

This sequence belongs to the universal ribosomal protein uS14 family. As to quaternary structure, part of the 30S ribosomal subunit.

Its subcellular location is the plastid. The protein localises to the chloroplast. Binds 16S rRNA, required for the assembly of 30S particles. The protein is Small ribosomal subunit protein uS14c of Zygnema circumcarinatum (Green alga).